The following is a 4558-amino-acid chain: Multifunctional-autoprocessing repeats-in-toxin (4558 aa).

Positions methionine 1–alanine 32 are cleaved as a signal peptide. RtxA repeat units follow at residues glycine 114 to serine 131, glycine 134 to threonine 151, glycine 154 to leucine 170, glycine 174 to threonine 197, glycine 200 to threonine 217, glycine 220 to threonine 237, glycine 268 to histidine 285, glycine 288 to phenylalanine 304, glycine 594 to histidine 611, glycine 614 to threonine 630, glycine 634 to threonine 651, glycine 654 to glycine 668, alanine 751 to glycine 763, methionine 769 to asparagine 781, alanine 792 to leucine 808, methionine 811 to threonine 826, methionine 830 to threonine 845, glycine 851 to leucine 865, methionine 868 to alanine 885, methionine 887 to asparagine 901, methionine 906 to aspartate 920, methionine 925 to alanine 942, methionine 944 to leucine 960, methionine 982 to asparagine 994, methionine 1001 to serine 1016, glycine 1041 to leucine 1053, alanine 1077 to aspartate 1089, alanine 1097 to valine 1112, glycine 1120 to isoleucine 1132, alanine 1135 to asparagine 1152, tryptophan 1155 to arginine 1169, alanine 1173 to valine 1189, glycine 1194 to threonine 1209, alanine 1211 to valine 1227, alanine 1230 to phenylalanine 1246, lysine 1252 to threonine 1266, alanine 1268 to threonine 1285, alanine 1306 to alanine 1323, and methionine 1325 to asparagine 1342. Disordered stretches follow at residues histidine 1623–serine 1688, threonine 1752–alanine 1779, and aspartate 1791–glycine 1890. Residues threonine 1625 to leucine 1634 show a composition bias toward polar residues. Over residues serine 1635–glutamine 1654 the composition is skewed to basic and acidic residues. Over residues glycine 1660–alanine 1679 the composition is skewed to polar residues. The segment covering aspartate 1791–histidine 1815 has biased composition (basic and acidic residues). Over residues histidine 1879–alanine 1888 the composition is skewed to polar residues. In terms of domain architecture, ACD spans valine 1988 to alanine 2422. Serine 1999–glutamate 2003 lines the ATP pocket. Mg(2+) contacts are provided by glutamate 2003, glutamate 2065, and glutamine 2149. Arginine 2255 lines the ATP pocket. Glutamate 2326 contacts Mg(2+). The interval glutamate 2574–leucine 2658 is membrane localization region (MLD). The tract at residues glutamate 2734–leucine 3098 is rho inactivation domain (RID). The segment at valine 3195–alanine 3310 is ABH effector region. A disordered region spans residues alanine 3404–serine 3426. Positions glycine 3414–serine 3426 are enriched in polar residues. Residues proline 3462–tryptophan 3646 enclose the Peptidase C80 domain. Residues glutamate 3468–arginine 3470, lysine 3495–histidine 3496, and arginine 3526 contribute to the 1D-myo-inositol hexakisphosphate site. Catalysis depends on histidine 3532, which acts as the For cysteine protease activity. Serine 3577 lines the 1D-myo-inositol hexakisphosphate pocket. The active-site Nucleophile; for cysteine protease activity is cysteine 3581. 1D-myo-inositol hexakisphosphate is bound by residues serine 3610–arginine 3612, arginine 3623–lysine 3624, lysine 3636, and lysine 3641.

Mg(2+) serves as cofactor.

Its subcellular location is the secreted. It localises to the host cytoplasm. It is found in the host cytosol. The protein resides in the host cell membrane. It catalyses the reaction L-lysyl-/S-(2E,6E,10E)-geranylgeranyl-L-cysteinyl-[protein] + hexadecanoyl-CoA = N(6)-hexadecanoyl-L-lysyl-/S-(2E,6E,10E)-geranylgeranyl-L-cysteinyl-[protein] + CoA + H(+). It carries out the reaction L-lysyl-/S-(2E,6E,10E)-geranylgeranyl-L-cysteinyl-[protein] + dodecanoyl-CoA = N(6)-dodecanoyl-L-lysyl-/S-(2E,6E,10E)-geranylgeranyl-L-cysteinyl-[protein] + CoA + H(+). The catalysed reaction is L-lysyl-/S-(2E,6E,10E)-geranylgeranyl-L-cysteinyl-[protein] + decanoyl-CoA = N(6)-decanoyl-L-lysyl-/S-(2E,6E,10E)-geranylgeranyl-L-cysteinyl-[protein] + CoA + H(+). Protease activity is inhibited by N-ethylmaleimide but not other protease inhibitors. Protease activity is inhibited by aza-leucine epoxide. Protease activity is activated upon binding inositol hexakisphosphate (InsP6) via an allosteric mechanism: the active site is disordered or occluded in the absence of InsP6, protecting the protease active-site sulfhydryl until the toxin enters a eukaryotic cell. Upon processing at the Leu-3441-Ala-3442 site, the peptidase C80 domain is converted to a form with much reduced affinity for InsP6, but is reactivated for high affinity binding of InsP6 by cooperative binding of both a new substrate and InsP6. Reactivation allows cleavage at other sites, specifically at Leu residues between the effector domains. In terms of biological role, precursor of a multifunctional toxin that causes destruction of the actin cytoskeleton by covalent cross-linking of actin and inactivation of Rho GTPases when translocated into the host cytoplasm. Upon translocation into the host cell, undergoes autoprocessing in cis mediated by the peptidase C80 domain (also named CPD domain): the protease activity is activated upon binding inositol hexakisphosphate (InsP6) present at the host cell membrane and delivers the Cysteine protease domain-containing toxin F3 chain to the host cytosol. The Cysteine protease domain-containing toxin F3 chain will then further cleave and release effector toxin chains that cause disassembly of the actin cytoskeleton and enhance V.cholerae colonization of the small intestine, possibly by facilitating evasion of phagocytic cells. Functionally, following autocatalytic cleavage in cis at the Leu-3441-Ala-3442 site, this chain mediates processing in trans to release other individual toxin chains to the host cytosol. Released effector toxin chains cause disassembly of the actin cytoskeleton and enhance V.cholerae colonization of the small intestine, possibly by facilitating evasion of phagocytic cells. Its function is as follows. Actin-directed toxin that catalyzes the covalent cross-linking of host cytoplasmic monomeric actin. Mediates the cross-link between 'Lys-50' of one monomer and 'Glu-270' of another actin monomer, resulting in formation of highly toxic actin oligomers that cause cell rounding. The toxin can be highly efficient at very low concentrations by acting on formin homology family proteins: toxic actin oligomers bind with high affinity to formins and adversely affect both nucleation and elongation abilities of formins, causing their potent inhibition in both profilin-dependent and independent manners. Acts as an acid--amino-acid ligase that transfers the gamma-phosphoryl group of ATP to the 'Glu-270' actin residue, resulting in the formation of an activated acyl phosphate intermediate. This intermediate is further hydrolyzed and the energy of hydrolysis is utilized for the formation of the amide bond between actin subunits. N-epsilon-fatty acyltransferase that mediates lysine-palmitoylation of host Rho GTPase proteins, with a strong preference for host Rac1. After delivery to the host cytosol, localizes to the host cell membrane where it palmitoylates host Rho GTPase proteins, resulting in loss of all active GTP-bound Rho and subsequent actin depolymerization. Prenylation of host Rac1 at the C-terminus is required for lysine-palmitoylation. In terms of biological role, indirectly activates the small GTPase CDC42. This Vibrio cholerae serotype O1 (strain ATCC 39315 / El Tor Inaba N16961) protein is Multifunctional-autoprocessing repeats-in-toxin.